The chain runs to 192 residues: Immunoglobulin superfamily member 23 (192 aa).

Residues 1–26 (MRAKPQSPLPRNPVPAWSPPTTTTDP) are disordered. Over residues 7–18 (SPLPRNPVPAWS) the composition is skewed to pro residues. In terms of domain architecture, Ig-like spans 20–128 (PTTTTDPMLE…QLVSEPVTIS (109 aa)). N-linked (GlcNAc...) asparagine glycosylation occurs at Asn64. Residues 158–178 (LLAAGILGAGALIAGMCFIII) form a helical membrane-spanning segment.

Expressed in bone and small intestine. Highly expressed in osteoclasts, and low expressed in osteoblasts and peripheral blood mononuclear cells (PBMCs).

It is found in the cell membrane. Its function is as follows. May be involved in osteoclast differentiation. The chain is Immunoglobulin superfamily member 23 from Homo sapiens (Human).